The following is a 230-amino-acid chain: Fibrillarin-like rRNA/tRNA 2'-O-methyltransferase (230 aa).

Residues 87 to 88 (TT), 105 to 106 (EF), 130 to 131 (DA), and 150 to 153 (DVAQ) contribute to the S-adenosyl-L-methionine site.

Belongs to the methyltransferase superfamily. Fibrillarin family. Interacts with nop5. Component of box C/D small ribonucleoprotein (sRNP) particles that contain rpl7ae, FlpA and nop5, plus a guide RNA.

Involved in pre-rRNA and tRNA processing. Utilizes the methyl donor S-adenosyl-L-methionine to catalyze the site-specific 2'-hydroxyl methylation of ribose moieties in rRNA and tRNA. Site specificity is provided by a guide RNA that base pairs with the substrate. Methylation occurs at a characteristic distance from the sequence involved in base pairing with the guide RNA. The chain is Fibrillarin-like rRNA/tRNA 2'-O-methyltransferase from Methanococcus maripaludis (strain C5 / ATCC BAA-1333).